We begin with the raw amino-acid sequence, 326 residues long: Cathepsin L-like proteinase (326 aa).

The N-terminal stretch at 1–15 is a signal peptide; the sequence is MRLFILAVLTVGVLG. Residues 16 to 106 constitute a propeptide, activation peptide; sequence SNDDLWHQWK…HGVPYEANNR (91 aa). At P109 the chain carries 3-hydroxyproline; partial. 3 disulfides stabilise this stretch: C129–C172, C163–C204, and C262–C311. The active site involves C132. P196 carries the 3-hydroxyproline; partial modification. Active-site residues include H269 and N289.

This sequence belongs to the peptidase C1 family. As to quaternary structure, monomer. Contains cysteine residues involved in intramolecular disulfide bonding.

The protein localises to the secreted. With respect to regulation, strongly inhibited by Antipain, E64 and Leupeptin, and weakly inhibited by iodoacetic acid (IAA) and phenylmethylsulfonyl fluoride (PMSF). Requires the presence of dithiothreitol (DTT) for activity. In terms of biological role, thiol protease. Probably involved in interaction with host tissues. Displays a similar activity to that of papain. Has high activity on Z-Phe-Arg-NHMec, but no activity on Z-Arg-NHMec. The chain is Cathepsin L-like proteinase from Fasciola hepatica (Liver fluke).